A 318-amino-acid chain; its full sequence is ZAR1-like protein (318 aa).

A disordered region spans residues 149–211 (LSDPPEAGQP…PVDSSQPLGR (63 aa)). Residues 155–169 (AGQPPPPLPPPSPPP) show a composition bias toward pro residues. The 3CxxC-type zinc finger occupies 219-304 (PKYGYFHCKD…QELCGRCKDK (86 aa)).

It belongs to the ZAR1 family. Interacts with YBX2.

It is found in the cytoplasm. It localises to the cytoplasmic ribonucleoprotein granule. In terms of biological role, mRNA-binding protein required for maternal mRNA storage, translation and degradation during oocyte maturation. Probably promotes formation of some phase-separated membraneless compartment that stores maternal mRNAs in oocytes: acts by undergoing liquid-liquid phase separation upon binding to maternal mRNAs. Binds to the 3'-UTR of maternal mRNAs, inhibiting their translation. The polypeptide is ZAR1-like protein (ZAR1L) (Bos taurus (Bovine)).